The primary structure comprises 342 residues: Succinoglycan biosynthesis protein ExoU (342 aa).

It belongs to the glycosyltransferase 2 family.

The protein resides in the cytoplasm. It functions in the pathway glycan metabolism; exopolysaccharide biosynthesis. In terms of biological role, glycosyltransferase required for the synthesis of succinoglycan (EPS I). Needed for the addition of the sixth sugar (glucose), catalyzes the formation of a beta-1,6 linkage between the fifth and sixth sugar. This Rhizobium meliloti (strain 1021) (Ensifer meliloti) protein is Succinoglycan biosynthesis protein ExoU (exoU).